Consider the following 715-residue polypeptide: Fatty acid oxidation complex subunit alpha (715 aa).

Residues 1–190 are enoyl-CoA hydratase; sequence MTTTSAFMLN…RAGLVDDVVP (190 aa). The tract at residues 306-715 is 3-hydroxyacyl-CoA dehydrogenase; that stretch reads GPLNSVGILG…WTNGETDQGN (410 aa).

This sequence in the N-terminal section; belongs to the enoyl-CoA hydratase/isomerase family. In the central section; belongs to the 3-hydroxyacyl-CoA dehydrogenase family. Heterotetramer of two alpha chains (FadJ) and two beta chains (FadI).

The protein localises to the cytoplasm. It carries out the reaction a (3S)-3-hydroxyacyl-CoA = a (2E)-enoyl-CoA + H2O. It catalyses the reaction a 4-saturated-(3S)-3-hydroxyacyl-CoA = a (3E)-enoyl-CoA + H2O. The enzyme catalyses a (3S)-3-hydroxyacyl-CoA + NAD(+) = a 3-oxoacyl-CoA + NADH + H(+). The catalysed reaction is (3S)-3-hydroxybutanoyl-CoA = (3R)-3-hydroxybutanoyl-CoA. Its pathway is lipid metabolism; fatty acid beta-oxidation. Functionally, catalyzes the formation of a hydroxyacyl-CoA by addition of water on enoyl-CoA. Also exhibits 3-hydroxyacyl-CoA epimerase and 3-hydroxyacyl-CoA dehydrogenase activities. This Salmonella schwarzengrund (strain CVM19633) protein is Fatty acid oxidation complex subunit alpha.